A 77-amino-acid polypeptide reads, in one-letter code: Spermatid-specific protein T2 (77 aa).

The tract at residues 1–21 is hydrophobic; the sequence is MKVAANTSKMLVEKLDLLKGG. Residues 1–77 form a disordered region; it reads MKVAANTSKM…YSRRRYRRRR (77 aa). The segment covering 20–77 has biased composition (basic residues); sequence GGRRRRRRSRRRRRSRRRRSRSPYRRRYRRRRRRRRSRRRRRYRRRRSYSRRRYRRRR.

In terms of processing, phosphorylation occurs at different degrees. The triphosphorylated form may be predominant in T2. SP2 appears to be phosphorylated in elongated spermatids, but dephosphorylated in mature sperm cells. Testis.

The protein localises to the nucleus. Its subcellular location is the chromosome. Functionally, cuttlefish spermiogenesis is characterized by a double nuclear protein transition: histones -&gt; spermatid-specific proteins (T1/T2) -&gt; protamines (SP1/SP2). The protamines compact sperm DNA into a highly condensed, stable and inactive complex. This is Spermatid-specific protein T2 from Sepia officinalis (Common cuttlefish).